The sequence spans 305 residues: Acetaldehyde dehydrogenase (305 aa).

13-16 serves as a coordination point for NAD(+); sequence SGNI. The Acyl-thioester intermediate role is filled by Cys128. Residues 159 to 167 and Asn278 each bind NAD(+); that span reads SAGPGTRQN.

The protein belongs to the acetaldehyde dehydrogenase family.

The catalysed reaction is acetaldehyde + NAD(+) + CoA = acetyl-CoA + NADH + H(+). The protein is Acetaldehyde dehydrogenase of Roseiflexus castenholzii (strain DSM 13941 / HLO8).